The primary structure comprises 87 residues: Beta-toxin Ct17 (87 aa).

Positions 1–19 (MNSLLMITACLVLIGTVWA) are cleaved as a signal peptide. Residues 20–85 (KKDGYLVDKT…TWPLPNKRCG (66 aa)) form the LCN-type CS-alpha/beta domain. Cystine bridges form between Cys31/Cys84, Cys35/Cys60, Cys44/Cys65, and Cys48/Cys67. Position 84 is a cysteine amide (Cys84).

This sequence belongs to the long (4 C-C) scorpion toxin superfamily. Sodium channel inhibitor family. Beta subfamily. In terms of tissue distribution, expressed by the venom gland.

Its subcellular location is the secreted. Its function is as follows. Beta toxins bind voltage-independently at site-4 of sodium channels (Nav) and shift the voltage of activation toward more negative potentials thereby affecting sodium channel activation and promoting spontaneous and repetitive firing. Is possibly lethal to mice, freshwater shrimp and crickets. The chain is Beta-toxin Ct17 from Centruroides tecomanus (Scorpion).